The following is a 161-amino-acid chain: SsrA-binding protein (161 aa).

The segment at 138–161 (DKRTDSKEKDWNRDKARIMKSSLR) is disordered. Positions 139 to 154 (KRTDSKEKDWNRDKAR) are enriched in basic and acidic residues.

It belongs to the SmpB family.

The protein resides in the cytoplasm. Functionally, required for rescue of stalled ribosomes mediated by trans-translation. Binds to transfer-messenger RNA (tmRNA), required for stable association of tmRNA with ribosomes. tmRNA and SmpB together mimic tRNA shape, replacing the anticodon stem-loop with SmpB. tmRNA is encoded by the ssrA gene; the 2 termini fold to resemble tRNA(Ala) and it encodes a 'tag peptide', a short internal open reading frame. During trans-translation Ala-aminoacylated tmRNA acts like a tRNA, entering the A-site of stalled ribosomes, displacing the stalled mRNA. The ribosome then switches to translate the ORF on the tmRNA; the nascent peptide is terminated with the 'tag peptide' encoded by the tmRNA and targeted for degradation. The ribosome is freed to recommence translation, which seems to be the essential function of trans-translation. The protein is SsrA-binding protein of Aliivibrio fischeri (strain MJ11) (Vibrio fischeri).